The following is a 64-amino-acid chain: DNA gyrase inhibitor YacG (64 aa).

Zn(2+) contacts are provided by Cys9, Cys12, Cys28, and Cys32. Positions 42–64 (DEENAIPGAPDMSDSDGWSEEQY) are disordered. The span at 54-64 (SDSDGWSEEQY) shows a compositional bias: acidic residues.

Belongs to the DNA gyrase inhibitor YacG family. As to quaternary structure, interacts with GyrB. The cofactor is Zn(2+).

Its function is as follows. Inhibits all the catalytic activities of DNA gyrase by preventing its interaction with DNA. Acts by binding directly to the C-terminal domain of GyrB, which probably disrupts DNA binding by the gyrase. The sequence is that of DNA gyrase inhibitor YacG from Vibrio vulnificus (strain CMCP6).